A 541-amino-acid polypeptide reads, in one-letter code: GPI alpha-1,2-mannosyltransferase 3 (541 aa).

Asparagine 18 is a glycosylation site (N-linked (GlcNAc...) asparagine). 9 helical membrane passes run 53 to 73 (LVLF…TSFV), 126 to 146 (VHLL…IADL), 182 to 202 (LTNT…PLEG), 214 to 234 (LVAL…PLLF), 245 to 265 (DLIL…SLII), 305 to 325 (GFPA…FLAP), 330 to 350 (IFLV…HKEF), 352 to 372 (FIYP…NNLK), and 377 to 397 (PALS…GLVH). A glycan (N-linked (GlcNAc...) asparagine) is linked at asparagine 417.

It belongs to the glycosyltransferase 22 family. PIGB subfamily.

The protein localises to the endoplasmic reticulum membrane. Its pathway is glycolipid biosynthesis; glycosylphosphatidylinositol-anchor biosynthesis. In terms of biological role, alpha-1,2-mannosyltransferase that catalyzes the transfer of the third mannose, via an alpha-1,2 bond, from a dolichol-phosphate-mannose (Dol-P-Man) to an alpha-D-Man-(1-&gt;6)-2-PEtn-alpha-D-Man-(1-&gt;4)-alpha-D-GlcN-(1-&gt;6)-(1-radyl,2-acyl-sn-glycero-3-phospho)-2-acyl-inositol intermediate to generate an alpha-D-Man-(1-&gt;2)-alpha-D-Man-(1-&gt;6)-2-PEtn-alpha-D-Man-(1-&gt;4)-alpha-D-GlcN-(1-&gt;6)-(1-radyl,2-acyl-sn-glycero-3-phospho)-2-acyl-inositol (also termed H6) and participates in the nineth step of the glycosylphosphatidylinositol-anchor biosynthesis. May also add the third mannose to an alpha-D-Man-(1-&gt;6)-alpha-D-Man-(1-&gt;4)-alpha-D-GlcN-(1-&gt;6)-(1-radyl,2-acyl-sn-glycero-3-phospho)-2-acyl-inositol (also termed H3) intermediate generating an alpha-D-Man-(1-&gt;2)-alpha-D-Man-(1-&gt;6)-alpha-D-Man-(1-&gt;4)-alpha-D-GlcN-(1-&gt;6)-(1-radyl,2-acyl-sn-glycero-3-phospho)-2-acyl-inositol (also termed H4). The protein is GPI alpha-1,2-mannosyltransferase 3 of Bos taurus (Bovine).